The sequence spans 354 residues: Uroporphyrinogen decarboxylase (354 aa).

Substrate-binding positions include 27-31 (RQAGR), D77, Y154, T209, and H327.

This sequence belongs to the uroporphyrinogen decarboxylase family. As to quaternary structure, homodimer.

The protein localises to the cytoplasm. It catalyses the reaction uroporphyrinogen III + 4 H(+) = coproporphyrinogen III + 4 CO2. Its pathway is porphyrin-containing compound metabolism; protoporphyrin-IX biosynthesis; coproporphyrinogen-III from 5-aminolevulinate: step 4/4. In terms of biological role, catalyzes the decarboxylation of four acetate groups of uroporphyrinogen-III to yield coproporphyrinogen-III. The chain is Uroporphyrinogen decarboxylase from Salmonella paratyphi B (strain ATCC BAA-1250 / SPB7).